The chain runs to 166 residues: Regulatory protein RecX (166 aa).

The protein belongs to the RecX family.

It localises to the cytoplasm. In terms of biological role, modulates RecA activity. This Salmonella arizonae (strain ATCC BAA-731 / CDC346-86 / RSK2980) protein is Regulatory protein RecX.